Consider the following 334-residue polypeptide: Putative peptide import ATP-binding protein BAB2_1053 (334 aa).

The ABC transporter domain maps to 22–272; that stretch reads VRTDDLVRDF…PLHPYSRALL (251 aa). Residue 64–71 participates in ATP binding; that stretch reads GESGSGKS.

Belongs to the ABC transporter superfamily. In terms of assembly, the complex is composed of two ATP-binding proteins (BAB2_1052 and BAB2_1053), two transmembrane proteins (BAB2_1050 and BAB2_1051) and a solute-binding protein (BAB2_1049).

It localises to the cell inner membrane. Functionally, probably part of an ABC transporter complex that could be involved in peptide import. Probably responsible for energy coupling to the transport system. The protein is Putative peptide import ATP-binding protein BAB2_1053 of Brucella abortus (strain 2308).